The following is a 546-amino-acid chain: Phosphoglucomutase (546 aa).

Ser135 acts as the Phosphoserine intermediate in catalysis. Mg(2+)-binding residues include Ser135, Asp288, Asp290, and Asp292.

This sequence belongs to the phosphohexose mutase family. Mg(2+) serves as cofactor.

The catalysed reaction is alpha-D-glucose 1-phosphate = alpha-D-glucose 6-phosphate. It participates in glycolipid metabolism; diglucosyl-diacylglycerol biosynthesis. Its function is as follows. Catalyzes the interconversion between glucose-6-phosphate and alpha-glucose-1-phosphate. This is the first step in the biosynthesis of diglucosyl-diacylglycerol (Glc2-DAG), i.e. a glycolipid found in the membrane, which is also used as a membrane anchor for lipoteichoic acid (LTA). The polypeptide is Phosphoglucomutase (pgcA) (Staphylococcus epidermidis (strain ATCC 35984 / DSM 28319 / BCRC 17069 / CCUG 31568 / BM 3577 / RP62A)).